Reading from the N-terminus, the 221-residue chain is Lysine N-acyltransferase MbtK (221 aa).

Residues 1–34 are disordered; that stretch reads MSDAPAESAPAQIDPAQTDPAEQPVQILPRERSD. H141 is a binding site for substrate. Catalysis depends on D179, which acts as the Proton acceptor.

Belongs to the lysine N-acyltransferase MbtK family. In terms of assembly, monomer.

It participates in siderophore biosynthesis; mycobactin biosynthesis. Acyltransferase required for the direct transfer of medium- to long-chain fatty acyl moieties from a carrier protein (MbtL) on to the epsilon-amino group of lysine residue in the mycobactin core. The protein is Lysine N-acyltransferase MbtK (mbtK) of Mycolicibacterium paratuberculosis (strain ATCC BAA-968 / K-10) (Mycobacterium paratuberculosis).